The primary structure comprises 441 residues: Phenylalanine-4-hydroxylase (441 aa).

Positions 23-102 constitute an ACT domain; the sequence is FSISKGSDKI…KATTLQESSN (80 aa). His-273, His-278, and Glu-318 together coordinate Fe cation.

Belongs to the biopterin-dependent aromatic amino acid hydroxylase family. As to quaternary structure, homotetramer. Requires Fe(2+) as cofactor.

The enzyme catalyses (6R)-L-erythro-5,6,7,8-tetrahydrobiopterin + L-phenylalanine + O2 = (4aS,6R)-4a-hydroxy-L-erythro-5,6,7,8-tetrahydrobiopterin + L-tyrosine. It carries out the reaction (6R)-L-erythro-5,6,7,8-tetrahydrobiopterin + L-tryptophan + O2 = 5-hydroxy-L-tryptophan + (4aS,6R)-4a-hydroxy-L-erythro-5,6,7,8-tetrahydrobiopterin. The protein operates within amino-acid degradation; L-phenylalanine degradation; acetoacetate and fumarate from L-phenylalanine: step 1/6. Its function is as follows. Catalyzes the hydroxylation of L-phenylalanine. Hydroxylates L-tryptophan to 5-hydroxy-L-tryptophan but does not hydroxylate L-tyrosine to L-DOPA. It uses D-threo-tetrahydrodictyopterin (DH4), also known as dictyoperin, as a cofactor. This chain is Phenylalanine-4-hydroxylase (pah), found in Dictyostelium discoideum (Social amoeba).